We begin with the raw amino-acid sequence, 199 residues long: Adenylyl-sulfate kinase (199 aa).

35–42 serves as a coordination point for ATP; sequence GLSGSGKS. Ser-109 functions as the Phosphoserine intermediate in the catalytic mechanism.

This sequence belongs to the APS kinase family.

It carries out the reaction adenosine 5'-phosphosulfate + ATP = 3'-phosphoadenylyl sulfate + ADP + H(+). It participates in sulfur metabolism; hydrogen sulfide biosynthesis; sulfite from sulfate: step 2/3. In terms of biological role, catalyzes the synthesis of activated sulfate. This chain is Adenylyl-sulfate kinase, found in Clostridium kluyveri (strain ATCC 8527 / DSM 555 / NBRC 12016 / NCIMB 10680 / K1).